Reading from the N-terminus, the 393-residue chain is METVLNHPLFMPVLVTLVIIAAFPLVAGYIVLVERKVLADFQVRLGPMRCGPHGLLQPIADALKLLLKEDIIPTDSDKAIFWFAPCISTITGLVAFAVIPFARKIYVADVNVGLLVISATSAVGILGIILGGWSSNSHYSLLGALRSAAQLVSYEVALAFALLSGVMVAGTLSMQGIVQSQADRGVWGIFANYGFMVVPFVLYIIAATAETNRAPFDLPEAESELVAGFHTEYSGFRWALYFLAEYANIFVISSVAVTLFWGGWLRPFSSVAWLEKPLNYGVPVILFVGSGLLTFTLIRKVVDPMQQKVLLGVVVLLVLIGAIMAIPMVNDAMIGLFWFLVKVSVIIYTMIWFRGTFPRYRYDQLMNIGWKIAIPVGMASVMVNAVLGMLGKH.

The next 10 helical transmembrane spans lie at 13–33 (VLVT…IVLV), 79–99 (AIFW…FAVI), 112–132 (VGLL…ILGG), 158–178 (LAFA…QGIV), 186–206 (VWGI…YIIA), 240–260 (LYFL…VTLF), 278–298 (LNYG…FTLI), 309–329 (VLLG…IPMV), 333–353 (MIGL…MIWF), and 368–388 (IGWK…AVLG).

Belongs to the complex I subunit 1 family. As to quaternary structure, NDH-1 is composed of 14 different subunits. Subunits NuoA, H, J, K, L, M, N constitute the membrane sector of the complex.

The protein resides in the cell inner membrane. The enzyme catalyses a quinone + NADH + 5 H(+)(in) = a quinol + NAD(+) + 4 H(+)(out). Its function is as follows. NDH-1 shuttles electrons from NADH, via FMN and iron-sulfur (Fe-S) centers, to quinones in the respiratory chain. The immediate electron acceptor for the enzyme in this species is believed to be ubiquinone. Couples the redox reaction to proton translocation (for every two electrons transferred, four hydrogen ions are translocated across the cytoplasmic membrane), and thus conserves the redox energy in a proton gradient. This subunit may bind ubiquinone. The sequence is that of NADH-quinone oxidoreductase subunit H 2 from Solibacter usitatus (strain Ellin6076).